Reading from the N-terminus, the 215-residue chain is Large ribosomal subunit protein uL4 (215 aa).

Positions 46 to 76 (TAKSKNRAEVSGGGRKPWAQKGGGRARAGSI) are disordered. The segment covering 56-71 (SGGGRKPWAQKGGGRA) has biased composition (gly residues).

It belongs to the universal ribosomal protein uL4 family. As to quaternary structure, part of the 50S ribosomal subunit.

In terms of biological role, one of the primary rRNA binding proteins, this protein initially binds near the 5'-end of the 23S rRNA. It is important during the early stages of 50S assembly. It makes multiple contacts with different domains of the 23S rRNA in the assembled 50S subunit and ribosome. Forms part of the polypeptide exit tunnel. This chain is Large ribosomal subunit protein uL4, found in Helicobacter acinonychis (strain Sheeba).